A 343-amino-acid chain; its full sequence is Aspartate carbamoyltransferase catalytic subunit (343 aa).

2 residues coordinate carbamoyl phosphate: arginine 91 and threonine 92. Lysine 119 is an L-aspartate binding site. Carbamoyl phosphate-binding residues include arginine 141, histidine 171, and glutamine 174. L-aspartate is bound by residues arginine 204 and arginine 259. Residues glycine 300 and proline 301 each coordinate carbamoyl phosphate.

Belongs to the aspartate/ornithine carbamoyltransferase superfamily. ATCase family. Heterododecamer (2C3:3R2) of six catalytic PyrB chains organized as two trimers (C3), and six regulatory PyrI chains organized as three dimers (R2).

The catalysed reaction is carbamoyl phosphate + L-aspartate = N-carbamoyl-L-aspartate + phosphate + H(+). The protein operates within pyrimidine metabolism; UMP biosynthesis via de novo pathway; (S)-dihydroorotate from bicarbonate: step 2/3. Catalyzes the condensation of carbamoyl phosphate and aspartate to form carbamoyl aspartate and inorganic phosphate, the committed step in the de novo pyrimidine nucleotide biosynthesis pathway. In Burkholderia thailandensis (strain ATCC 700388 / DSM 13276 / CCUG 48851 / CIP 106301 / E264), this protein is Aspartate carbamoyltransferase catalytic subunit.